A 405-amino-acid polypeptide reads, in one-letter code: Multidrug resistance protein MdtH (405 aa).

12 helical membrane passes run 13 to 33 (YFLLMDNMLVVMGFYVVFPLI), 34 to 54 (SIRFVDQLGWAALLVGIALGL), 78 to 95 (MIIAGMLMRALGFVLMGI), 99 to 116 (PWLLWLSCALSALGGTLF), 139 to 159 (LLMMQDSACSVIGALLGSWLL), 165 to 185 (LVCLAGAVLFVFAAIFNAWLL), 213 to 233 (YVLTLTGYYMLSVQVMLMLPI), 243 to 263 (AAVKWMYAIEAALSLSLLYPI), 277 to 297 (LMAGLTVMLLSLFPIGLIEDL), 299 to 319 (ALFMLIGLFYIGSIIAEPARE), 340 to 360 (LGLALGGAIGYSGGGWLYDVG), and 365 to 385 (IPQLPWFMLGLIGFITLLGLY).

It belongs to the major facilitator superfamily. DHA1 family. MdtH (TC 2.A.1.2.21) subfamily.

The protein resides in the cell inner membrane. The sequence is that of Multidrug resistance protein MdtH from Sodalis glossinidius (strain morsitans).